The sequence spans 211 residues: Large ribosomal subunit protein uL3 (211 aa).

The disordered stretch occupies residues 122–157 (NQKRNNFGRGPMSHGSKNHRAPGSIGAGTTPGRVYP).

It belongs to the universal ribosomal protein uL3 family. As to quaternary structure, part of the 50S ribosomal subunit. Forms a cluster with proteins L14 and L19.

One of the primary rRNA binding proteins, it binds directly near the 3'-end of the 23S rRNA, where it nucleates assembly of the 50S subunit. This Trichormus variabilis (strain ATCC 29413 / PCC 7937) (Anabaena variabilis) protein is Large ribosomal subunit protein uL3.